Consider the following 136-residue polypeptide: Peptide methionine sulfoxide reductase MsrB (136 aa).

The 123-residue stretch at 7–129 (SSSHENTLTE…NSASLSFTDD (123 aa)) folds into the MsrB domain. The Zn(2+) site is built by Cys-46, Cys-49, Cys-95, and Cys-98. Residue Cys-118 is the Nucleophile of the active site.

The protein belongs to the MsrB Met sulfoxide reductase family. Zn(2+) is required as a cofactor.

It catalyses the reaction L-methionyl-[protein] + [thioredoxin]-disulfide + H2O = L-methionyl-(R)-S-oxide-[protein] + [thioredoxin]-dithiol. The polypeptide is Peptide methionine sulfoxide reductase MsrB (Erwinia tasmaniensis (strain DSM 17950 / CFBP 7177 / CIP 109463 / NCPPB 4357 / Et1/99)).